The chain runs to 510 residues: Beta-galactosidase (510 aa).

Glutamate 210 acts as the Proton donor in catalysis. The Nucleophile role is filled by glutamate 414.

The protein belongs to the glycosyl hydrolase 1 family.

It carries out the reaction Hydrolysis of terminal non-reducing beta-D-galactose residues in beta-D-galactosides.. The sequence is that of Beta-galactosidase from Pyrococcus woesei.